Here is a 322-residue protein sequence, read N- to C-terminus: Protein-methionine-sulfoxide reductase catalytic subunit MsrP (322 aa).

The tat-type signal signal peptide spans 1–59; that stretch reads MSLRDALKTPSSEITDEAVYRDRRRLLQLFALTPALSVAGCAEADPPPPPKTVVTPAQA. Mo-molybdopterin contacts are provided by residues Asn-79, 82 to 83, Cys-137, Thr-172, Asn-220, Arg-225, and 236 to 238; these read YE and SIK.

This sequence belongs to the MsrP family. In terms of assembly, heterodimer of a catalytic subunit (MsrP) and a heme-binding subunit (MsrQ). Requires Mo-molybdopterin as cofactor. Predicted to be exported by the Tat system. The position of the signal peptide cleavage has not been experimentally proven.

It localises to the periplasm. The catalysed reaction is L-methionyl-[protein] + a quinone + H2O = L-methionyl-(S)-S-oxide-[protein] + a quinol. The enzyme catalyses L-methionyl-[protein] + a quinone + H2O = L-methionyl-(R)-S-oxide-[protein] + a quinol. Part of the MsrPQ system that repairs oxidized periplasmic proteins containing methionine sulfoxide residues (Met-O), using respiratory chain electrons. Thus protects these proteins from oxidative-stress damage caused by reactive species of oxygen and chlorine generated by the host defense mechanisms. MsrPQ is essential for the maintenance of envelope integrity under bleach stress, rescuing a wide series of structurally unrelated periplasmic proteins from methionine oxidation. The catalytic subunit MsrP is non-stereospecific, being able to reduce both (R-) and (S-) diastereoisomers of methionine sulfoxide. This is Protein-methionine-sulfoxide reductase catalytic subunit MsrP from Xanthomonas campestris pv. campestris (strain ATCC 33913 / DSM 3586 / NCPPB 528 / LMG 568 / P 25).